Consider the following 276-residue polypeptide: Ribonuclease T2 (276 aa).

An N-terminal signal peptide occupies residues 1–17 (MGMLALGAMQLAAGAVF). 5 disulfides stabilise this stretch: Cys22/Cys41, Cys30/Cys77, Cys40/Cys143, Cys85/Cys135, and Cys208/Cys242. The N-linked (GlcNAc...) asparagine glycan is linked to Asn32. His70 is an active-site residue. The N-linked (GlcNAc...) asparagine glycan is linked to Asn93. Active-site residues include Glu128 and His132. Asn256 carries N-linked (GlcNAc...) asparagine glycosylation.

The protein belongs to the RNase T2 family.

The catalysed reaction is a ribonucleotidyl-ribonucleotide-RNA + H2O = a 3'-end 3'-phospho-ribonucleotide-RNA + a 5'-end dephospho-ribonucleoside-RNA + H(+). The polypeptide is Ribonuclease T2 (rntB) (Aspergillus oryzae (strain ATCC 42149 / RIB 40) (Yellow koji mold)).